The following is a 745-amino-acid chain: Probable copper-transporting ATPase PacS (745 aa).

Over 1-94 (MAQTINLQLE…PVFSAKLVTG (94 aa)) the chain is Cytoplasmic. An HMA domain is found at 3–68 (QTINLQLEGM…AVERAGYHAR (66 aa)). A metal cation contacts are provided by Cys-14 and Cys-17. A helical transmembrane segment spans residues 95 to 115 (LVISAVLFFGSLPMMLGVNIP). The Extracellular segment spans residues 116-125 (HFPHIFHDPW). A helical membrane pass occupies residues 126-145 (LQWLLATPVQFWSGAEFYRG). Residues 146-152 (AWKSVRT) lie on the Cytoplasmic side of the membrane. A helical membrane pass occupies residues 153–173 (RSATMDTLVALGTSAAYFYSV). Residues 174 to 193 (AITLFPQWLTSQGLAAHVYF) are Extracellular-facing. A helical membrane pass occupies residues 194–214 (EAAAVVITLILLGRSLEQRAR). Residues 215 to 342 (RETSAAIRKL…KAPIQHFVDR (128 aa)) lie on the Cytoplasmic side of the membrane. A helical transmembrane segment spans residues 343–365 (ITHWFVPTVIVVAIAAFCIWWLT). Residues 366 to 372 (TGNITLA) lie on the Extracellular side of the membrane. The chain crosses the membrane as a helical span at residues 373–390 (VLTLVEVLIIACPCALGL). Topologically, residues 391-543 (ATPTSVMVGT…QAQQWEKEQK (153 aa)) are cytoplasmic. Asp-428 functions as the 4-aspartylphosphate intermediate in the catalytic mechanism. A helical transmembrane segment spans residues 544–564 (TVIWLAVDTEVKALLAIADAI). Residues 565–687 (KPSSPQVVQA…KLSRATMGNI (123 aa)) are Extracellular-facing. Mg(2+)-binding residues include Asp-633 and Asp-637. A helical membrane pass occupies residues 688–707 (RQNLFFAFIYNVIGIPVAAG). At 708–719 (LFYPLFGLLLNP) the chain is on the cytoplasmic side. The helical transmembrane segment at 720–738 (ILAGAAMAFSSVSVVTNAL) threads the bilayer. At 739–745 (RLKKFCP) the chain is on the extracellular side.

Belongs to the cation transport ATPase (P-type) (TC 3.A.3) family. Type IB subfamily.

The protein resides in the cell membrane. The enzyme catalyses Cu(+)(in) + ATP + H2O = Cu(+)(out) + ADP + phosphate + H(+). Functionally, may play a role in the osmotic adaptation. The protein is Probable copper-transporting ATPase PacS (pacS) of Synechocystis sp. (strain ATCC 27184 / PCC 6803 / Kazusa).